The following is a 206-amino-acid chain: Thiamine-phosphate synthase (206 aa).

Residues 36 to 40 (QLRAK) and Asn68 each bind 4-amino-2-methyl-5-(diphosphooxymethyl)pyrimidine. Mg(2+) is bound by residues Asp69 and Asp88. 4-amino-2-methyl-5-(diphosphooxymethyl)pyrimidine is bound at residue Ser105. Position 131–133 (131–133 (TPT)) interacts with 2-[(2R,5Z)-2-carboxy-4-methylthiazol-5(2H)-ylidene]ethyl phosphate. A 4-amino-2-methyl-5-(diphosphooxymethyl)pyrimidine-binding site is contributed by Lys134. Gly162 serves as a coordination point for 2-[(2R,5Z)-2-carboxy-4-methylthiazol-5(2H)-ylidene]ethyl phosphate.

Belongs to the thiamine-phosphate synthase family. It depends on Mg(2+) as a cofactor.

It carries out the reaction 2-[(2R,5Z)-2-carboxy-4-methylthiazol-5(2H)-ylidene]ethyl phosphate + 4-amino-2-methyl-5-(diphosphooxymethyl)pyrimidine + 2 H(+) = thiamine phosphate + CO2 + diphosphate. The enzyme catalyses 2-(2-carboxy-4-methylthiazol-5-yl)ethyl phosphate + 4-amino-2-methyl-5-(diphosphooxymethyl)pyrimidine + 2 H(+) = thiamine phosphate + CO2 + diphosphate. The catalysed reaction is 4-methyl-5-(2-phosphooxyethyl)-thiazole + 4-amino-2-methyl-5-(diphosphooxymethyl)pyrimidine + H(+) = thiamine phosphate + diphosphate. Its pathway is cofactor biosynthesis; thiamine diphosphate biosynthesis; thiamine phosphate from 4-amino-2-methyl-5-diphosphomethylpyrimidine and 4-methyl-5-(2-phosphoethyl)-thiazole: step 1/1. Condenses 4-methyl-5-(beta-hydroxyethyl)thiazole monophosphate (THZ-P) and 2-methyl-4-amino-5-hydroxymethyl pyrimidine pyrophosphate (HMP-PP) to form thiamine monophosphate (TMP). This chain is Thiamine-phosphate synthase, found in Thermus thermophilus (strain ATCC BAA-163 / DSM 7039 / HB27).